A 900-amino-acid chain; its full sequence is Translation initiation factor IF-2 (900 aa).

Disordered stretches follow at residues 30–77 (GEFV…SLDK) and 89–291 (NGKA…YDSM). Over residues 89–112 (NGKATAAPAKAADSGGAAIVSPTT) the composition is skewed to low complexity. Residues 113–129 (PAAPEPPTAVPPSPQAP) are compositionally biased toward pro residues. Residues 175 to 187 (PGTARPGVPRPGA) show a composition bias toward low complexity. Residues 215-271 (GRPGAPGAGRSDAGGGNYRGGGVGAAPGTGFRGRPGGGGGGRPGQRGGAAGAFGRPG) show a composition bias toward gly residues. The segment covering 275 to 284 (RRGRKSKRQK) has biased composition (basic residues). In terms of domain architecture, tr-type G spans 396–567 (VRPPVVTVMG…AVLLTADAAL (172 aa)). Positions 405-412 (GHVDHGKT) are G1. 405–412 (GHVDHGKT) contacts GTP. The segment at 430–434 (GITQH) is G2. Positions 455–458 (DTPG) are G3. Residues 455–459 (DTPGH) and 509–512 (NKID) contribute to the GTP site. The tract at residues 509 to 512 (NKID) is G4. The G5 stretch occupies residues 545-547 (SAK).

This sequence belongs to the TRAFAC class translation factor GTPase superfamily. Classic translation factor GTPase family. IF-2 subfamily.

Its subcellular location is the cytoplasm. In terms of biological role, one of the essential components for the initiation of protein synthesis. Protects formylmethionyl-tRNA from spontaneous hydrolysis and promotes its binding to the 30S ribosomal subunits. Also involved in the hydrolysis of GTP during the formation of the 70S ribosomal complex. The chain is Translation initiation factor IF-2 from Mycobacterium bovis (strain BCG / Pasteur 1173P2).